The sequence spans 99 residues: Large ribosomal subunit protein uL23 (99 aa).

This sequence belongs to the universal ribosomal protein uL23 family. In terms of assembly, part of the 50S ribosomal subunit. Contacts protein L29, and trigger factor when it is bound to the ribosome.

One of the early assembly proteins it binds 23S rRNA. One of the proteins that surrounds the polypeptide exit tunnel on the outside of the ribosome. Forms the main docking site for trigger factor binding to the ribosome. This chain is Large ribosomal subunit protein uL23, found in Pseudomonas fluorescens (strain SBW25).